Reading from the N-terminus, the 270-residue chain is ATP synthase subunit a 1 (270 aa).

5 helical membrane-spanning segments follow: residues 38 to 58, 98 to 118, 143 to 163, 208 to 228, and 239 to 259; these read VHIDSLFFSWFTGLIFLGIFY, IAPLALTIFCWVFLMNVMDLV, DVNITMAMALGVFALMIYYSI, LFGNMFAGEVVFILCAAMLPW, and AIFHILVITIQAFVFMMLTIV.

This sequence belongs to the ATPase A chain family. In terms of assembly, F-type ATPases have 2 components, CF(1) - the catalytic core - and CF(0) - the membrane proton channel. CF(1) has five subunits: alpha(3), beta(3), gamma(1), delta(1), epsilon(1). CF(0) has three main subunits: a(1), b(2) and c(9-12). The alpha and beta chains form an alternating ring which encloses part of the gamma chain. CF(1) is attached to CF(0) by a central stalk formed by the gamma and epsilon chains, while a peripheral stalk is formed by the delta and b chains.

It is found in the cell inner membrane. In terms of biological role, key component of the proton channel; it plays a direct role in the translocation of protons across the membrane. The polypeptide is ATP synthase subunit a 1 (Vibrio campbellii (strain ATCC BAA-1116)).